A 246-amino-acid polypeptide reads, in one-letter code: Trypsin-5 (246 aa).

The first 15 residues, 1 to 15, serve as a signal peptide directing secretion; that stretch reads MNSLLFLALVGAAVA. Positions 16–23 are cleaved as a propeptide — activation peptide; the sequence is FPVDDDDK. Positions 24-244 constitute a Peptidase S1 domain; the sequence is IVGGYTCREN…YVDWIQDTIA (221 aa). A disulfide bridge links Cys-48 with Cys-64. Catalysis depends on charge relay system residues His-63 and Asp-107. Cystine bridges form between Cys-139-Cys-206, Cys-171-Cys-185, and Cys-196-Cys-220. The Charge relay system role is filled by Ser-200.

Belongs to the peptidase S1 family. Post-translationally, proteolytically cleaved and activated by an autocatalytic mechanism. Cleavage by CTRC inhibits autoactivation. Expressed in the heart, lung, brain, kidney, liver, epididymis, ovary and uterus. Expression in the testis is limited to round and elongating spermatids.

It localises to the cytoplasmic vesicle. It is found in the secretory vesicle. Its subcellular location is the acrosome. It catalyses the reaction Preferential cleavage: Arg-|-Xaa, Lys-|-Xaa.. Activated by autocatalytic cleavage. Cleavage by CTRC inhibits autoactivation. Functionally, serine protease capable of autoactivation. In Mus musculus (Mouse), this protein is Trypsin-5.